Reading from the N-terminus, the 217-residue chain is Probable transaldolase (217 aa).

Residue K83 is the Schiff-base intermediate with substrate of the active site.

Belongs to the transaldolase family. Type 3B subfamily.

It localises to the cytoplasm. The enzyme catalyses D-sedoheptulose 7-phosphate + D-glyceraldehyde 3-phosphate = D-erythrose 4-phosphate + beta-D-fructose 6-phosphate. Its pathway is carbohydrate degradation; pentose phosphate pathway; D-glyceraldehyde 3-phosphate and beta-D-fructose 6-phosphate from D-ribose 5-phosphate and D-xylulose 5-phosphate (non-oxidative stage): step 2/3. Transaldolase is important for the balance of metabolites in the pentose-phosphate pathway. The protein is Probable transaldolase of Coprothermobacter proteolyticus (strain ATCC 35245 / DSM 5265 / OCM 4 / BT).